Consider the following 260-residue polypeptide: Imidazole glycerol phosphate synthase subunit HisF (260 aa).

Catalysis depends on residues Asp12 and Asp131.

Belongs to the HisA/HisF family. In terms of assembly, heterodimer of HisH and HisF.

The protein localises to the cytoplasm. The catalysed reaction is 5-[(5-phospho-1-deoxy-D-ribulos-1-ylimino)methylamino]-1-(5-phospho-beta-D-ribosyl)imidazole-4-carboxamide + L-glutamine = D-erythro-1-(imidazol-4-yl)glycerol 3-phosphate + 5-amino-1-(5-phospho-beta-D-ribosyl)imidazole-4-carboxamide + L-glutamate + H(+). Its pathway is amino-acid biosynthesis; L-histidine biosynthesis; L-histidine from 5-phospho-alpha-D-ribose 1-diphosphate: step 5/9. Its function is as follows. IGPS catalyzes the conversion of PRFAR and glutamine to IGP, AICAR and glutamate. The HisF subunit catalyzes the cyclization activity that produces IGP and AICAR from PRFAR using the ammonia provided by the HisH subunit. This Corynebacterium jeikeium (strain K411) protein is Imidazole glycerol phosphate synthase subunit HisF.